The sequence spans 371 residues: MRILFVGPPLYGLLYPVLSLAQAFRVNGHEVLIASGGQFAQKAAEAGLVVFDAAPGLDSEAGYRHHEAQRKKSNIGTQMGNFSFFSEEMADHLVEFAGHWRPDLIIYPPLGVIGPLIAAKYDIPVVMQTVGFGHTPWHIRGVTRSLTDAYRRHNVGATPRDMAWIDVTPPSMSILENDGEPIIPMQYVPYNGGAVWEPWWERRPDRKRLLVSLGTVKPMVDGLDLIAWVMDSASEVDAEIILHISANARSDLRSLPSNVRLVDWIPMGVFLNGADGFIHHGGAGNTLTALHAGIPQIVFGQGADRPVNARVVAERGCGIIPGDVGLSSNMINAFLNNRSLRKASEEVAAEMAAQPCPGEVAKSLITMVQKG.

The protein belongs to the glycosyltransferase 28 family.

Its subcellular location is the cytoplasm. The catalysed reaction is enterobactin + UDP-alpha-D-glucose = monoglucosyl-enterobactin + UDP. The enzyme catalyses monoglucosyl-enterobactin + UDP-alpha-D-glucose = diglucosyl-enterobactin + UDP + H(+). It carries out the reaction diglucosyl-enterobactin + UDP-alpha-D-glucose = triglucosyl-enterobactin + UDP + H(+). It participates in siderophore biosynthesis; enterobactin biosynthesis. Its function is as follows. Catalyzes the successive monoglucosylation, diglucosylation and triglucosylation of enterobactin (Ent). Transfers glucosyl groups from uridine-5'-diphosphoglucose (UDP-Glc) to C5 of one, two or three of the 2,3-dihydroxybenzoyl (DHB) units of Ent to yield monoglucosyl-C-Ent (MGE), diglucosyl-C-Ent (DGE) and triglucosyl-C-Ent (TGE). Glucosylation decreases the membrane affinity of Ent and increases the iron acquisition rate. This Escherichia coli O6:H1 (strain CFT073 / ATCC 700928 / UPEC) protein is Enterobactin C-glucosyltransferase.